Reading from the N-terminus, the 518-residue chain is Probable pectinesterase/pectinesterase inhibitor 16 (518 aa).

The N-terminal stretch at 1–33 (MASSSSISNHKIPNTLMFLVIVNFLYLIQTNSA) is a signal peptide. Residues 30 to 172 (TNSAVSISSN…TGLLTSSLDL (143 aa)) are pectinesterase inhibitor 16. N-linked (GlcNAc...) asparagine glycosylation is found at Asn-82 and Asn-161. Residues 213 to 502 (DAVVAPDGSG…FTVASFIDGN (290 aa)) form a pectinesterase 16 region. Residues Thr-289 and Gln-319 each contribute to the substrate site. Asp-342 functions as the Proton donor; for pectinesterase activity in the catalytic mechanism. The active-site Nucleophile; for pectinesterase activity is the Asp-363. Residues Arg-422 and Trp-424 each coordinate substrate.

It in the N-terminal section; belongs to the PMEI family. This sequence in the C-terminal section; belongs to the pectinesterase family. In terms of tissue distribution, expressed in siliques and floral stems.

It is found in the secreted. The protein resides in the cell wall. The catalysed reaction is [(1-&gt;4)-alpha-D-galacturonosyl methyl ester](n) + n H2O = [(1-&gt;4)-alpha-D-galacturonosyl](n) + n methanol + n H(+). The protein operates within glycan metabolism; pectin degradation; 2-dehydro-3-deoxy-D-gluconate from pectin: step 1/5. Functionally, acts in the modification of cell walls via demethylesterification of cell wall pectin. The sequence is that of Probable pectinesterase/pectinesterase inhibitor 16 (PME16) from Arabidopsis thaliana (Mouse-ear cress).